The following is a 117-amino-acid chain: Immunoglobulin kappa variable 1-5 (117 aa).

Positions 1 to 22 are cleaved as a signal peptide; it reads MDMRVPAQLLGLLLLWLPGAKC. A framework-1 region spans residues 23–45; it reads DIQMTQSPSTLSASVGDRVTITC. One can recognise an Ig-like domain in the interval 24-117; it reads IQMTQSPSTL…YYCQQYNSYS (94 aa). Cys45 and Cys110 are disulfide-bonded. Residues 46–56 form a complementarity-determining-1 region; it reads RASQSISSWLA. The segment at 57–71 is framework-2; sequence WYQQKPGKAPKLLIY. The tract at residues 72-78 is complementarity-determining-2; it reads KASSLES. A framework-3 region spans residues 79–110; it reads GVPSRFSGSGSGTEFTLTISSLQPDDFATYYC. Residues 111-117 are complementarity-determining-3; sequence QQYNSYS.

Immunoglobulins are composed of two identical heavy chains and two identical light chains; disulfide-linked.

It localises to the secreted. The protein localises to the cell membrane. Functionally, v region of the variable domain of immunoglobulin light chains that participates in the antigen recognition. Immunoglobulins, also known as antibodies, are membrane-bound or secreted glycoproteins produced by B lymphocytes. In the recognition phase of humoral immunity, the membrane-bound immunoglobulins serve as receptors which, upon binding of a specific antigen, trigger the clonal expansion and differentiation of B lymphocytes into immunoglobulins-secreting plasma cells. Secreted immunoglobulins mediate the effector phase of humoral immunity, which results in the elimination of bound antigens. The antigen binding site is formed by the variable domain of one heavy chain, together with that of its associated light chain. Thus, each immunoglobulin has two antigen binding sites with remarkable affinity for a particular antigen. The variable domains are assembled by a process called V-(D)-J rearrangement and can then be subjected to somatic hypermutations which, after exposure to antigen and selection, allow affinity maturation for a particular antigen. The polypeptide is Immunoglobulin kappa variable 1-5 (Homo sapiens (Human)).